A 136-amino-acid polypeptide reads, in one-letter code: Large ribosomal subunit protein uL16 (136 aa).

Belongs to the universal ribosomal protein uL16 family. As to quaternary structure, part of the 50S ribosomal subunit.

Functionally, binds 23S rRNA and is also seen to make contacts with the A and possibly P site tRNAs. The chain is Large ribosomal subunit protein uL16 from Shewanella piezotolerans (strain WP3 / JCM 13877).